Consider the following 188-residue polypeptide: Archaetidylinositol phosphate synthase (188 aa).

Helical transmembrane passes span 20–40 and 51–71; these read LASL…ITLL and ILAG…GALA. Residues D64, D67, D85, and D89 each contribute to the Mg(2+) site. D89 serves as the catalytic Proton acceptor. 2 helical membrane-spanning segments follow: residues 96–116 and 147–167; these read ILFG…LTLI and IIII…YLVA.

Belongs to the CDP-alcohol phosphatidyltransferase class-I family. Requires Mn(2+) as cofactor. Mg(2+) is required as a cofactor.

It localises to the cell membrane. It carries out the reaction CDP-2,3-bis-O-(phytanyl)-sn-glycerol + 1D-myo-inositol 3-phosphate = saturated 1-archaetidyl-1D-myo-inositol 3-phosphate + CMP + H(+). Its pathway is lipid metabolism; phospholipid metabolism. Catalyzes the formation of archaetidylinositol phosphate (AIP) from CDP-archaeol (CDP-ArOH or CDP-2,3-bis-(O-phytanyl)-sn-glycerol) and 1L-myo-inositol 1-phosphate (IP or 1D-myo-inositol 3-phosphate). AIP is a precursor of archaetidyl-myo-inositol (AI), an ether-type inositol phospholipid ubiquitously distributed in archaea membranes and essential for glycolipid biosynthesis in archaea. The polypeptide is Archaetidylinositol phosphate synthase (Pyrococcus horikoshii (strain ATCC 700860 / DSM 12428 / JCM 9974 / NBRC 100139 / OT-3)).